The primary structure comprises 93 residues: Small ribosomal subunit protein mS33 (93 aa).

This sequence belongs to the mitochondrion-specific ribosomal protein mS33 family. Component of the mitochondrial small ribosomal subunit (mt-SSU). Mature yeast 74S mitochondrial ribosomes consist of a small (37S) and a large (54S) subunit. The 37S small subunit contains a 15S ribosomal RNA (15S mt-rRNA) and at least 32 different proteins. The 54S large subunit contains a 21S rRNA (21S mt-rRNA) and at least 45 different proteins.

It localises to the mitochondrion. Its function is as follows. Component of the mitochondrial ribosome (mitoribosome), a dedicated translation machinery responsible for the synthesis of mitochondrial genome-encoded proteins, including at least some of the essential transmembrane subunits of the mitochondrial respiratory chain. The mitoribosomes are attached to the mitochondrial inner membrane and translation products are cotranslationally integrated into the membrane. The protein is Small ribosomal subunit protein mS33 (rsm27) of Schizosaccharomyces pombe (strain 972 / ATCC 24843) (Fission yeast).